The following is a 96-amino-acid chain: uncharacterized protein (96 aa).

The signal sequence occupies residues 1 to 28 (MNKKAIVGIFMSILMAGLVGCAGSSDAQ).

This is an uncharacterized protein from Butyrivibrio fibrisolvens.